Here is a 771-residue protein sequence, read N- to C-terminus: U3 small nucleolar RNA-associated protein 14 homolog A (771 aa).

The segment at 23-49 (PKDYLLSESEDEGDNDGERKHQKLLEA) is disordered. Serine 29, serine 31, serine 52, serine 77, and serine 81 each carry phosphoserine. Positions 40–67 (ERKHQKLLEAISSLDGKNRRKLAERSEA) form a coiled coil. Lysine 122 participates in a covalent cross-link: Glycyl lysine isopeptide (Lys-Gly) (interchain with G-Cter in SUMO2). Threonine 205 carries the phosphothreonine modification. 2 coiled-coil regions span residues 216 to 290 (SLEE…EKAR) and 317 to 347 (LEAR…EEEE). Disordered regions lie at residues 334 to 355 (TQKL…DVEE) and 367 to 557 (MNAD…KKEQ). A compositionally biased stretch (acidic residues) spans 342-355 (ESEEEEGGTEDVEE). Basic and acidic residues predominate over residues 399-436 (LEAHGVSESEGEERPVAEEEILLREFEERRSLRKRSEL). 2 positions are modified to phosphoserine: serine 405 and serine 407. Citrulline is present on arginine 433. Serine 437 and serine 445 each carry phosphoserine. Lysine 449 is covalently cross-linked (Glycyl lysine isopeptide (Lys-Gly) (interchain with G-Cter in SUMO2)). Serine 453 is modified (phosphoserine). Over residues 504 to 529 (RPERVQTLEELEELGKEECFQNKELP) the composition is skewed to basic and acidic residues. Lysine 519 participates in a covalent cross-link: Glycyl lysine isopeptide (Lys-Gly) (interchain with G-Cter in SUMO2). Residues 535–544 (GQQSERTPNN) show a composition bias toward polar residues. Basic and acidic residues predominate over residues 547–557 (DAPKEKKKKEQ). A Phosphoserine modification is found at serine 569. Citrulline is present on arginine 589. A Glycyl lysine isopeptide (Lys-Gly) (interchain with G-Cter in SUMO2) cross-link involves residue lysine 733. Positions 740–751 (RSSSRSDLSVIQ) are enriched in polar residues. A disordered region spans residues 740–771 (RSSSRSDLSVIQRNPKRITTRHKKQLKKCSVD). A compositionally biased stretch (basic residues) spans 753-771 (NPKRITTRHKKQLKKCSVD).

The protein belongs to the UTP14 family. As to quaternary structure, interacts with DHX37. In terms of processing, citrullinated by PADI4. Ubiquitously expressed.

The protein localises to the nucleus. Its subcellular location is the nucleolus. In terms of biological role, may be required for ribosome biogenesis. The polypeptide is U3 small nucleolar RNA-associated protein 14 homolog A (UTP14A) (Homo sapiens (Human)).